A 263-amino-acid chain; its full sequence is Transcription factor bHLH27 (263 aa).

The segment covering 32–47 (EAFSGSGESSSPDGAA) has biased composition (low complexity). Positions 32–61 (EAFSGSGESSSPDGAATSPASSKNVVSERN) are disordered. The segment covering 49–58 (SPASSKNVVS) has biased composition (polar residues). The region spanning 50-99 (PASSKNVVSERNRRQKLNQRLFALRSVVPNISKLDKASVIKDSIDYMQEL) is the bHLH domain.

Homodimer. As to expression, expressed constitutively in roots, leaves, stems, and flowers.

The protein localises to the nucleus. The chain is Transcription factor bHLH27 (BHLH27) from Arabidopsis thaliana (Mouse-ear cress).